Consider the following 277-residue polypeptide: Release factor glutamine methyltransferase (277 aa).

Residues 119 to 123 (GTGCG), Asp142, Trp170, and Asn184 contribute to the S-adenosyl-L-methionine site. 184–187 (NPPY) lines the substrate pocket.

This sequence belongs to the protein N5-glutamine methyltransferase family. PrmC subfamily.

It catalyses the reaction L-glutaminyl-[peptide chain release factor] + S-adenosyl-L-methionine = N(5)-methyl-L-glutaminyl-[peptide chain release factor] + S-adenosyl-L-homocysteine + H(+). Methylates the class 1 translation termination release factors RF1/PrfA and RF2/PrfB on the glutamine residue of the universally conserved GGQ motif. The protein is Release factor glutamine methyltransferase of Buchnera aphidicola subsp. Baizongia pistaciae (strain Bp).